We begin with the raw amino-acid sequence, 302 residues long: MVWKRLGALVVFPLQMIYLVVKAAVGLVLPAKLRDLSRENVLITGGGRGIGRQLAREFAERGARKIVLWGRTEKCLKETTEEIRQMGTECHYFICDVGNREEVYQTAKAVREKVGDITILVNNAAVVHGKSLMDSDDDALPKSQHINTLGQFWTTKAFLPRMLELQNGHIVCLNSVLALSAIPGAIDYCTSKASAFAFMESLTLGLLDCPGVSATTVLPFHTSTEMFQGMRVRFPNLFPPLKPETVARRTVEAVQLNQALLLLPWTMHALIILKSILPQAALEEIHKFSGTYTCINTFKGRT.

4 consecutive transmembrane segments (helical) span residues Leu9 to Leu29, Ile170 to Thr190, Ala195 to Thr215, and Ala253 to Leu273. A substrate-binding site is contributed by Ser175. Residue Tyr188 is the Proton acceptor of the active site.

Belongs to the short-chain dehydrogenases/reductases (SDR) family. In the retina, expressed in cone but not rod outer segments.

It localises to the membrane. The catalysed reaction is all-trans-retinol + NADP(+) = all-trans-retinal + NADPH + H(+). In terms of biological role, catalyzes the reduction of all-trans-retinal to all-trans-retinol in the presence of NADPH. The sequence is that of Short-chain dehydrogenase/reductase 3 (DHRS3) from Bos taurus (Bovine).